Consider the following 143-residue polypeptide: Small ribosomal subunit protein bS6 (143 aa).

Residues T98–A143 form a disordered region. Residues K105–D124 show a composition bias toward basic and acidic residues.

This sequence belongs to the bacterial ribosomal protein bS6 family.

Functionally, binds together with bS18 to 16S ribosomal RNA. This Xanthomonas euvesicatoria pv. vesicatoria (strain 85-10) (Xanthomonas campestris pv. vesicatoria) protein is Small ribosomal subunit protein bS6.